We begin with the raw amino-acid sequence, 359 residues long: tRNA N6-adenosine threonylcarbamoyltransferase (359 aa).

The Fe cation site is built by His115 and His119. Substrate contacts are provided by residues Leu137–Gly141, Asp170, Gly183, and Asn283. A Fe cation-binding site is contributed by Asp311. The segment at Ala328–Ala359 is disordered.

Belongs to the KAE1 / TsaD family. Fe(2+) is required as a cofactor.

It is found in the cytoplasm. It catalyses the reaction L-threonylcarbamoyladenylate + adenosine(37) in tRNA = N(6)-L-threonylcarbamoyladenosine(37) in tRNA + AMP + H(+). Functionally, required for the formation of a threonylcarbamoyl group on adenosine at position 37 (t(6)A37) in tRNAs that read codons beginning with adenine. Is involved in the transfer of the threonylcarbamoyl moiety of threonylcarbamoyl-AMP (TC-AMP) to the N6 group of A37, together with TsaE and TsaB. TsaD likely plays a direct catalytic role in this reaction. The sequence is that of tRNA N6-adenosine threonylcarbamoyltransferase from Brucella melitensis biotype 2 (strain ATCC 23457).